The following is a 146-amino-acid chain: 3-dehydroquinate dehydratase (146 aa).

Residue tyrosine 22 is the Proton acceptor of the active site. The substrate site is built by asparagine 73, histidine 79, and aspartate 86. The active-site Proton donor is the histidine 99. Substrate contacts are provided by residues 100-101 (IS) and arginine 110.

This sequence belongs to the type-II 3-dehydroquinase family. As to quaternary structure, homododecamer.

The catalysed reaction is 3-dehydroquinate = 3-dehydroshikimate + H2O. It participates in metabolic intermediate biosynthesis; chorismate biosynthesis; chorismate from D-erythrose 4-phosphate and phosphoenolpyruvate: step 3/7. Its function is as follows. Catalyzes a trans-dehydration via an enolate intermediate. The polypeptide is 3-dehydroquinate dehydratase (Prochlorococcus marinus (strain MIT 9515)).